Reading from the N-terminus, the 76-residue chain is Large ribosomal subunit protein uL29 (76 aa).

This sequence belongs to the universal ribosomal protein uL29 family.

This Corynebacterium kroppenstedtii (strain DSM 44385 / JCM 11950 / CIP 105744 / CCUG 35717) protein is Large ribosomal subunit protein uL29.